Reading from the N-terminus, the 39-residue chain is Mu-theraphotoxin-Ae1a (39 aa).

3 cysteine pairs are disulfide-bonded: cysteine 7/cysteine 21, cysteine 14/cysteine 26, and cysteine 20/cysteine 33. Phenylalanine 39 is modified (phenylalanine amide).

Belongs to the neurotoxin 10 (Hwtx-1) family. 47 subfamily. In terms of tissue distribution, expressed by the venom gland.

It is found in the secreted. Functionally, insecticidal toxin that acts, at least partially, by inhibiting insect voltage-gated sodium (NaV) channels of several insect species. The toxin binds to the voltage sensor in NaV channel domain II and inhibits channel opening by shifting the threshold for channel activation to more positive voltages. The toxin binding is sensitive to residues in the S1-S2 loop of the domain II voltage sensor. In vivo, the recombinant toxin causes paralysis and/or death to two dipteran species (Lucilia cuprina and Drosophila melanogaster). In contrast, the toxin does not show paralytic or lethal effect on the cotton bollworm Helicoverpa armigera and the triatomine bug Rhodinius prolixus. The chain is Mu-theraphotoxin-Ae1a from Augacephalus ezendami (Mozambique baboon spider).